We begin with the raw amino-acid sequence, 309 residues long: Succinate--CoA ligase [ADP-forming] subunit alpha-2, mitochondrial (309 aa).

The transit peptide at 1–9 (MLSSSFERN) directs the protein to the hydrogenosome. Residues K54 and 107–109 (ITE) each bind CoA. Y171 lines the substrate pocket. The active-site Tele-phosphohistidine intermediate is the H262.

The protein belongs to the succinate/malate CoA ligase alpha subunit family. In terms of assembly, heterodimer of an alpha and a beta subunit.

Its subcellular location is the hydrogenosome lumen. The catalysed reaction is succinate + ATP + CoA = succinyl-CoA + ADP + phosphate. The protein operates within carbohydrate metabolism; tricarboxylic acid cycle; succinate from succinyl-CoA (ligase route): step 1/1. Functionally, succinyl-CoA synthetase functions in the citric acid cycle (TCA), coupling the hydrolysis of succinyl-CoA to the synthesis of ATP and thus represents the only step of substrate-level phosphorylation in the TCA. The alpha subunit of the enzyme binds the substrates coenzyme A and phosphate, while succinate binding and nucleotide specificity is provided by the beta subunit. This Trichomonas vaginalis protein is Succinate--CoA ligase [ADP-forming] subunit alpha-2, mitochondrial (ALPHA-SCS2).